Consider the following 184-residue polypeptide: dCTP deaminase (184 aa).

Residues 107–112 (KSTYAR), 131–133 (TLE), glutamine 152, tyrosine 166, and glutamine 176 contribute to the dCTP site. The active-site Proton donor/acceptor is glutamate 133.

This sequence belongs to the dCTP deaminase family. Homotrimer.

It catalyses the reaction dCTP + H2O + H(+) = dUTP + NH4(+). Its pathway is pyrimidine metabolism; dUMP biosynthesis; dUMP from dCTP (dUTP route): step 1/2. Catalyzes the deamination of dCTP to dUTP. The sequence is that of dCTP deaminase from Rhizorhabdus wittichii (strain DSM 6014 / CCUG 31198 / JCM 15750 / NBRC 105917 / EY 4224 / RW1) (Sphingomonas wittichii).